The chain runs to 546 residues: MTPGEVRRLYFIIRTFLSYGLDELIPRMRLTLPLRLWRYSLFWMPNRHKDKLLGERLRLALQELGPVWIKFGQMLSTRRDLFPPQIADQLALLQDKVAPFDGRLAKAQIEEAMGGLPVEAWFDDFDIQPLASASIAQVHTARLKSNGKEVVIKVIRPDILPVIQADLKLIYRLARWVPRLLPDGRRLRPTEVVREYEKTLIDELNLLRESANAIQLRRNFENSPMLYIPEVYSDYCSQNMMVMERIYGIPVSDVAALEKNGTNMKLLAERGVKVFFTQVFRDSFFHADMHPGNIFVSHEHPENPQYIGIDCGIVGSLNKEDKRYLAENFIAFFNRDYRKVAELHVDSGWVPPDTNVEDFEFAIRTVCEPIFEKPLAEISFGHVLLNLFNTARRFNMEVQPQLVLLQKTLLYVEGVGRQLYPQLDLWKTAKPFLESWIKDQVGIPALTRALKEKAPFWVEKMPEIPELVYDSLRQGKYLQHSVDKIARELQVNHVRQSQSRYLLGIGATLLLSGSFLLVNRPEWGLMPGWLMVGGVVVWLVGWRKTR.

In terms of domain architecture, Protein kinase spans aspartate 124 to leucine 502. ATP contacts are provided by residues leucine 130–valine 138 and lysine 153. Catalysis depends on aspartate 288, which acts as the Proton acceptor. The next 2 helical transmembrane spans lie at tyrosine 501–proline 521 and glutamate 522–tryptophan 542.

It belongs to the ABC1 family. UbiB subfamily.

The protein localises to the cell inner membrane. It functions in the pathway cofactor biosynthesis; ubiquinone biosynthesis [regulation]. Is probably a protein kinase regulator of UbiI activity which is involved in aerobic coenzyme Q (ubiquinone) biosynthesis. The chain is Probable protein kinase UbiB from Salmonella agona (strain SL483).